The primary structure comprises 787 residues: GPI ethanolamine phosphate transferase 2 (787 aa).

Residues N33, N185, and N397 are each glycosylated (N-linked (GlcNAc...) asparagine). A run of 3 helical transmembrane segments spans residues 400–420 (FLTY…VWNF), 426–446 (YIEH…SSFI), and 455–475 (WITI…LVVL). N485 carries N-linked (GlcNAc...) asparagine glycosylation. Helical transmembrane passes span 504–524 (HTSV…FPFL) and 536–556 (LLSV…FAIV). N-linked (GlcNAc...) asparagine glycosylation is present at N581. Residues 591 to 611 (LVPIARIFFQICGVSIIILLF) form a helical membrane-spanning segment. N-linked (GlcNAc...) asparagine glycosylation is present at N617. Residues 629 to 651 (VIKFVLLLQTSSANIPLFLIFEI) traverse the membrane as a helical segment. A glycan (N-linked (GlcNAc...) asparagine) is linked at N669. 4 helical membrane passes run 671-693 (TFFQ…YNGV), 699-719 (IYVV…YWAL), 740-760 (GTCL…WSVF), and 767-787 (YAAW…LGVL).

The protein belongs to the PIGG/PIGN/PIGO family. PIGG subfamily.

The protein localises to the endoplasmic reticulum membrane. It functions in the pathway glycolipid biosynthesis; glycosylphosphatidylinositol-anchor biosynthesis. Its function is as follows. Ethanolamine phosphate transferase involved in glycosylphosphatidylinositol-anchor biosynthesis. Transfers ethanolamine phosphate to the GPI second mannose. The sequence is that of GPI ethanolamine phosphate transferase 2 (LAS21) from Kluyveromyces lactis (strain ATCC 8585 / CBS 2359 / DSM 70799 / NBRC 1267 / NRRL Y-1140 / WM37) (Yeast).